The following is a 479-amino-acid chain: Glutamyl-tRNA reductase (479 aa).

Substrate is bound by residues 49-52, serine 109, 114-116, and glutamine 120; these read TCNR and EQQ. Cysteine 50 (nucleophile) is an active-site residue. 191–196 is a binding site for NADP(+); it reads GAGSMG.

The protein belongs to the glutamyl-tRNA reductase family. Homodimer.

It catalyses the reaction (S)-4-amino-5-oxopentanoate + tRNA(Glu) + NADP(+) = L-glutamyl-tRNA(Glu) + NADPH + H(+). The protein operates within porphyrin-containing compound metabolism; protoporphyrin-IX biosynthesis; 5-aminolevulinate from L-glutamyl-tRNA(Glu): step 1/2. Its function is as follows. Catalyzes the NADPH-dependent reduction of glutamyl-tRNA(Glu) to glutamate 1-semialdehyde (GSA). The sequence is that of Glutamyl-tRNA reductase from Rhodococcus jostii (strain RHA1).